We begin with the raw amino-acid sequence, 898 residues long: Phosphoenolpyruvate carboxylase (898 aa).

Residues histidine 138 and lysine 561 contribute to the active site.

The protein belongs to the PEPCase type 1 family. Mg(2+) is required as a cofactor.

The catalysed reaction is oxaloacetate + phosphate = phosphoenolpyruvate + hydrogencarbonate. Its function is as follows. Forms oxaloacetate, a four-carbon dicarboxylic acid source for the tricarboxylic acid cycle. This is Phosphoenolpyruvate carboxylase from Streptococcus pneumoniae serotype 4 (strain ATCC BAA-334 / TIGR4).